The chain runs to 417 residues: Ribonuclease T2-like (417 aa).

Residues Met-1–Ala-22 form the signal peptide. Intrachain disulfides connect Cys-45/Cys-63, Cys-52/Cys-99, Cys-62/Cys-165, Cys-107/Cys-157, and Cys-229/Cys-264. Residue His-92 is part of the active site. N-linked (GlcNAc...) asparagine glycosylation occurs at Asn-115. Active-site residues include Glu-150 and His-154. The disordered stretch occupies residues Lys-274–Thr-296. Residues Pro-276 to Lys-288 are compositionally biased toward basic and acidic residues. An N-linked (GlcNAc...) asparagine glycan is attached at Asn-383.

Belongs to the RNase T2 family.

The protein resides in the vacuole lumen. The protein localises to the cytoplasm. It catalyses the reaction a ribonucleotidyl-ribonucleotide-RNA + H2O = a 3'-end 3'-phospho-ribonucleotide-RNA + a 5'-end dephospho-ribonucleoside-RNA + H(+). Functionally, rnase which modulates cell survival under stress conditions. Released from the vacuole to the cytoplasm during stress to promote tRNA and rRNA cleavage and to activate separately a downstream pathway that promotes cell death. Involved in cell size, vacuolar morphology and growth at high temperatures and high salt concentration. This chain is Ribonuclease T2-like (rny1), found in Emericella nidulans (strain FGSC A4 / ATCC 38163 / CBS 112.46 / NRRL 194 / M139) (Aspergillus nidulans).